Consider the following 245-residue polypeptide: Probable septum site-determining protein MinC (245 aa).

A compositionally biased stretch (basic and acidic residues) spans 113 to 132 (RERPLEPLVGEEKKKPEKPP). Residues 113-138 (RERPLEPLVGEEKKKPEKPPEPTIKP) are disordered.

This sequence belongs to the MinC family. As to quaternary structure, interacts with MinD and FtsZ.

Its function is as follows. Cell division inhibitor that blocks the formation of polar Z ring septums. Rapidly oscillates between the poles of the cell to destabilize FtsZ filaments that have formed before they mature into polar Z rings. Prevents FtsZ polymerization. The protein is Probable septum site-determining protein MinC of Pseudomonas fluorescens (strain SBW25).